The primary structure comprises 436 residues: Prenyltransferase nscD (436 aa).

The protein belongs to the tryptophan dimethylallyltransferase family.

The protein operates within secondary metabolite biosynthesis. Prenyltransferase; part of the gene cluster that mediates the biosynthesis of neosartoricin B, a prenylated anthracenone that probably exhibits T-cell antiproliferative activity, suggestive of a physiological role as an immunosuppressive agent. The non-reducing polyketide synthase nscA probably synthesizes and cyclizes the decaketide backbone. The hydrolase nscB then mediates the product release through hydrolysis followed by spontaneous decarboxylation. The prenyltransferase nscD catalyzes the addition of the dimethylallyl group to the aromatic C5. The FAD-dependent monooxygenase nscC is then responsible for the stereospecific hydroxylation at C2. Neosartoricin B can be converted into two additional compounds neosartoricins C and D. Neosartoricin C is a spirocyclic compound that is cyclized through the attack of C3 hydroxyl on C14, followed by dehydration. On the other hand, neosartoricin D is a further cyclized compound in which attack of C2 on C14 in neosartoricin C results in the formation of the acetal-containing dioxabicyclo-octanone ring. Both of these compounds are novel and possibly represent related metabolites of the gene cluster. The polypeptide is Prenyltransferase nscD (Trichophyton rubrum (strain ATCC MYA-4607 / CBS 118892) (Athlete's foot fungus)).